A 61-amino-acid polypeptide reads, in one-letter code: MLNIFCLICICLNSTLYSSSFFFAKLPEAYAFFNPIIDVMPIIPVLFFLLAFVWQAAVSFR.

Residues 1–24 (MLNIFCLICICLNSTLYSSSFFFA) constitute a propeptide that is removed on maturation. Residues 32–52 (FFNPIIDVMPIIPVLFFLLAF) traverse the membrane as a helical segment.

It belongs to the PsbK family. As to quaternary structure, PSII is composed of 1 copy each of membrane proteins PsbA, PsbB, PsbC, PsbD, PsbE, PsbF, PsbH, PsbI, PsbJ, PsbK, PsbL, PsbM, PsbT, PsbX, PsbY, PsbZ, Psb30/Ycf12, at least 3 peripheral proteins of the oxygen-evolving complex and a large number of cofactors. It forms dimeric complexes.

The protein localises to the plastid. It is found in the chloroplast thylakoid membrane. One of the components of the core complex of photosystem II (PSII). PSII is a light-driven water:plastoquinone oxidoreductase that uses light energy to abstract electrons from H(2)O, generating O(2) and a proton gradient subsequently used for ATP formation. It consists of a core antenna complex that captures photons, and an electron transfer chain that converts photonic excitation into a charge separation. The protein is Photosystem II reaction center protein K of Phalaenopsis aphrodite subsp. formosana (Moth orchid).